Consider the following 135-residue polypeptide: Holo-[acyl-carrier-protein] synthase (135 aa).

Mg(2+) is bound by residues Asp-8 and Glu-58.

This sequence belongs to the P-Pant transferase superfamily. AcpS family. It depends on Mg(2+) as a cofactor.

The protein resides in the cytoplasm. The catalysed reaction is apo-[ACP] + CoA = holo-[ACP] + adenosine 3',5'-bisphosphate + H(+). In terms of biological role, transfers the 4'-phosphopantetheine moiety from coenzyme A to a Ser of acyl-carrier-protein. This is Holo-[acyl-carrier-protein] synthase from Leuconostoc citreum (strain KM20).